Here is a 75-residue protein sequence, read N- to C-terminus: Translation initiation factor IF-1 (75 aa).

The 75-residue stretch at 1–75 (MANLPKEQKL…SKGRIVYRFK (75 aa)) folds into the S1-like domain.

It belongs to the IF-1 family. Component of the 30S ribosomal translation pre-initiation complex which assembles on the 30S ribosome in the order IF-2 and IF-3, IF-1 and N-formylmethionyl-tRNA(fMet); mRNA recruitment can occur at any time during PIC assembly.

The protein resides in the cytoplasm. Functionally, one of the essential components for the initiation of protein synthesis. Stabilizes the binding of IF-2 and IF-3 on the 30S subunit to which N-formylmethionyl-tRNA(fMet) subsequently binds. Helps modulate mRNA selection, yielding the 30S pre-initiation complex (PIC). Upon addition of the 50S ribosomal subunit IF-1, IF-2 and IF-3 are released leaving the mature 70S translation initiation complex. This Mesomycoplasma hyopneumoniae (strain 232) (Mycoplasma hyopneumoniae) protein is Translation initiation factor IF-1.